A 185-amino-acid polypeptide reads, in one-letter code: Transcription factor FapR (185 aa).

The protein belongs to the FapR family.

Functionally, transcriptional factor involved in regulation of membrane lipid biosynthesis by repressing genes involved in fatty acid and phospholipid metabolism. The sequence is that of Transcription factor FapR from Staphylococcus aureus (strain Mu3 / ATCC 700698).